Here is a 155-residue protein sequence, read N- to C-terminus: Protein SREK1IP1 (155 aa).

The segment at 13 to 30 (AGCKKCGYPGHLTFECRN) adopts a CCHC-type zinc-finger fold. A disordered region spans residues 43–155 (DVSSTSTEDS…SSSSQSSSSD (113 aa)). The span at 58–74 (EVARAPADKKNVTDTGK) shows a compositional bias: basic and acidic residues. A compositionally biased stretch (basic residues) spans 75–93 (KKLKRKKEKKLKKHRKRLH). Residues 94–103 (SSSESDDNSK) show a composition bias toward basic and acidic residues. Residues 104–137 (AKKRKSQKKEKRVKHKAKKGKQHKKDKRKEKRER) show a composition bias toward basic residues. Positions 140–155 (SSSSSSSSSSQSSSSD) are enriched in low complexity.

In terms of biological role, possible splicing regulator involved in the control of cellular survival. This is Protein SREK1IP1 (srek1ip1) from Xenopus tropicalis (Western clawed frog).